The chain runs to 845 residues: SLIT and NTRK-like protein 2 (845 aa).

Residues 1-21 (MLSGVWFLSVLTVAGILQTES) form the signal peptide. The Extracellular portion of the chain corresponds to 22–621 (RKTAKDICKI…LHTEVPLSVL (600 aa)). 2 disulfide bridges follow: Cys-29–Cys-35 and Cys-33–Cys-46. 6 LRR repeats span residues 63-84 (RIYQ…EFVN), 87-108 (NAVT…AFSG), 111-132 (TLKR…TFLG), 135-156 (SLEY…AFSK), 159-180 (KLKV…VFRF), and 182-203 (LLTH…GVLE). Asn-84 carries N-linked (GlcNAc...) asparagine glycosylation. Residues 167 to 215 (DNLLLSLPSNVFRFVLLTHLDLRGNRLKVMPFAGVLEHIGGIMEIQLEE) are required for interaction with PTPRD. In terms of domain architecture, LRRCT 1 spans 216–265 (NPWNCTCDLLPLKAWLDTITVFVGEIVCETPFRLHGKDVTQLTRQDLCPR). Disulfide bonds link Cys-220/Cys-243 and Cys-222/Cys-263. A disordered region spans residues 263-321 (CPRKSASDSSQRGSHADTHVQRLSPTMNPALNPTRAPKASRPPKMRNRPTPRVTVSKDR). Residues 283–293 (QRLSPTMNPAL) show a composition bias toward polar residues. In terms of domain architecture, LRRNT spans 331-373 (QTKSPVPLTCPSSCVCTSQSSDNGLNVNCQERKFTNISDLQPK). LRR repeat units follow at residues 376–397 (SPKK…DLLE), 400–421 (SLDL…AFTN), 424–445 (SLRR…MFDG), 448–469 (SLQY…TFDA), 472–493 (NLQL…IFGG), and 495–516 (ALTR…GVLD). N-linked (GlcNAc...) asparagine glycosylation is present at Asn-421. An LRRCT 2 domain is found at 529–580 (NPWDCTCDIMGLKDWTEHANSPVIINEVTCESPAKHAGEILKFLGREAICPD). Residues 622-642 (ILGLLVVFILSVCFGAGLFVF) form a helical membrane-spanning segment. At 643 to 845 (VLKRRKGVPS…LEKQTAISQL (203 aa)) the chain is on the cytoplasmic side. Tyr-756 carries the post-translational modification Phosphotyrosine.

This sequence belongs to the SLITRK family. In terms of assembly, interacts with PTPRD; this interaction is PTPRD splicing-dependent and may induce pre-synaptic differentiation. Interacts with NTRK2. In terms of tissue distribution, expressed predominantly in the cerebral cortex of the brain but also at low levels in the spinal cord and medulla. Also expressed in some astrocytic brain tumors such as astrocytomas, oligodendrogliomas, glioblastomas, gangliogliomas and primitive neuroectodermal tumors.

It is found in the membrane. The protein resides in the cell membrane. It localises to the cell projection. Its subcellular location is the dendrite. In terms of biological role, it is involved in synaptogenesis and promotes excitatory synapse differentiation. Suppresses neurite outgrowth. Involved in the negative regulation of NTRK2. The chain is SLIT and NTRK-like protein 2 (SLITRK2) from Homo sapiens (Human).